Reading from the N-terminus, the 218-residue chain is MAGKEEIIAKAKNSITEFDEELAAEVAEEALAAGVDPVELIEKGFTAGMEEVGEQFGQGALFLPHVLAAAEAMKAGIEVITPEMEKRKSQTKNLGTVIIGTIEGDIHSIGKDIVASMLNIAGFKVVDLGRDVAIKTFVEKVKELKPQVVASSALMTTTMVNQIQIEEQLKEAGVRDQVKTMVGGAPVTQDWADKIGADIYGESANDAVAKVKAALKVG.

The B12-binding N-terminal domain maps to 1–92; sequence MAGKEEIIAK…EMEKRKSQTK (92 aa). The B12-binding domain occupies 94-218; it reads LGTVIIGTIE…AKVKAALKVG (125 aa). Methylcob(III)alamin is bound at residue His107.

Belongs to the methylamine corrinoid protein family. As to quaternary structure, can form a complex with MttB.

The protein operates within one-carbon metabolism; methanogenesis from trimethylamine. Functionally, acts probably as a methyl group carrier between MttB and either MtbA or MtaA. In Methanosarcina mazei (strain ATCC BAA-159 / DSM 3647 / Goe1 / Go1 / JCM 11833 / OCM 88) (Methanosarcina frisia), this protein is Trimethylamine corrinoid protein 2 (mttC2).